The chain runs to 98 residues: NADH-ubiquinone oxidoreductase chain 4L (98 aa).

Helical transmembrane passes span 1-21, 29-49, and 61-81; these read MSLV…GLLM, ALLC…LTIL, and IILL…LVTI.

It belongs to the complex I subunit 4L family. Core subunit of respiratory chain NADH dehydrogenase (Complex I) which is composed of 45 different subunits.

It localises to the mitochondrion inner membrane. It carries out the reaction a ubiquinone + NADH + 5 H(+)(in) = a ubiquinol + NAD(+) + 4 H(+)(out). Functionally, core subunit of the mitochondrial membrane respiratory chain NADH dehydrogenase (Complex I) which catalyzes electron transfer from NADH through the respiratory chain, using ubiquinone as an electron acceptor. Part of the enzyme membrane arm which is embedded in the lipid bilayer and involved in proton translocation. The polypeptide is NADH-ubiquinone oxidoreductase chain 4L (MT-ND4L) (Ziphius cavirostris (Cuvier's beaked whale)).